The chain runs to 866 residues: MQKISVASMLKPVRLHTVREEAVAGAEAKAKVGAKTGAKMGAKTGAKSGLEADTAAGETLDAGASSEVLQLHVPRSRSHSQSISKSNSVISGSSYSSAGRIIGVNSARRPSDNLMLQISAHSDGDSDDEAGGDTPSKAAETHANAVPKPVRPTSDNSIRSNDTALFSANPTDSSNGSASDSDYDEQHDTSMVSGKSATTMMSPSLALSIGSGMTRSDVITPNKYSNLDSGSLGIAETPKARYIFSNVNRNRSQSSIKSSENSSPLRFVDGPNQRRTLPGASNTYLHSNSTSAILPTSRAMTPSHRYRLRKEMRDVALKKSIKQKEKFYEEQDSNLDLKDDNVDASLIWNIPMASYSTSSFLNTTDSKHKDTNIKVTSPENNRVINNKIERQDRRFPQKNQVHSRSQPNLPRLQQRPMKRPVHQQQQPITCFEDIPATPIPGVSNVTDTEFIQDTIQNLSSVYLHSQEMKSRGQLEKRQSSTQYLPLNVKEMSDLGMEDLVLVSDKKLEAVSSSRPTYLPPKSTKEKQMHEHEISKYMKMASDEQIQRKISQTKHMEEDKANHERYAHLLQRGITRKSSLFDLRKISWKTAISDELRCSIYHTILESDAQLVSSKYLENFDYLNSILDQMDFPTDKESEIKQIIEKNITTKIGYSSVKDKELTLLLKLKSISKQGLMVGDAQLFHNFLNCKSFKTLKDIWEIANLIQLTCFNDTCKDKFDSRIIDPRGITARILHSPSFKAEMTSSIMNFNTWWNIMSRIDNNLFMWIMDIIVIENCQCFTNKQINKDQLRDKNWDYYVNKYVVVNYKILASLAASVLLDYHFGFNDLKHLERIDKKFCIPLYSEDTECNIINSSFIKKWHHQYKKY.

Disordered stretches follow at residues 24–49 (AGAE…AKSG), 72–94 (HVPR…SGSS), 119–199 (SAHS…SATT), 249–282 (RNRS…GASN), and 390–424 (RQDR…VHQQ). Residues 79-94 (HSQSISKSNSVISGSS) are compositionally biased toward low complexity. 2 stretches are compositionally biased toward polar residues: residues 153-180 (TSDN…SASD) and 189-199 (TSMVSGKSATT). A compositionally biased stretch (low complexity) spans 252 to 263 (SQSSIKSSENSS). 2 stretches are compositionally biased toward polar residues: residues 273-282 (QRRTLPGASN) and 397-408 (QKNQVHSRSQPN).

Belongs to the SBE2 family.

The protein resides in the golgi apparatus. In terms of biological role, with SBE22, is involved in cell wall integrity and polarity processes like bud growth. This Candida glabrata (strain ATCC 2001 / BCRC 20586 / JCM 3761 / NBRC 0622 / NRRL Y-65 / CBS 138) (Yeast) protein is Protein SBE2 (SBE2).